A 178-amino-acid polypeptide reads, in one-letter code: Natriuretic and helokinestatin peptides (178 aa).

The first 25 residues, methionine 1–alanine 25, serve as a signal peptide directing secretion. Propeptides lie at residues asparagine 26–asparagine 58, alanine 69–asparagine 73, alanine 85–asparagine 89, alanine 103–asparagine 112, and alanine 123–arginine 146. Disordered regions lie at residues alanine 69–lysine 107 and arginine 135–glycine 155. Cysteine 153 and cysteine 169 are disulfide-bonded.

This sequence in the C-terminal section; belongs to the natriuretic peptide family. Expressed by the venom gland.

It localises to the secreted. In terms of biological role, helokinestatins antagonize the vasodilatory actions of bradykinin at the B2 bradykinin receptor (BDKRB2), with helokinestatin-1 being the most potent antagonist. Exhibits hypotensive and vasodepressor activities, possibly by targeting natriuretic peptide receptors NPR1 and NPR2. The polypeptide is Natriuretic and helokinestatin peptides (Heloderma suspectum cinctum (Banded Gila monster)).